Reading from the N-terminus, the 1377-residue chain is DNA-directed RNA polymerase subunit beta' (1377 aa).

Zn(2+) is bound by residues Cys70, Cys72, Cys85, and Cys88. Mg(2+)-binding residues include Asp460, Asp462, and Asp464. Zn(2+)-binding residues include Cys808, Cys882, Cys889, and Cys892.

The protein belongs to the RNA polymerase beta' chain family. In terms of assembly, the RNAP catalytic core consists of 2 alpha, 1 beta, 1 beta' and 1 omega subunit. When a sigma factor is associated with the core the holoenzyme is formed, which can initiate transcription. The cofactor is Mg(2+). It depends on Zn(2+) as a cofactor.

It carries out the reaction RNA(n) + a ribonucleoside 5'-triphosphate = RNA(n+1) + diphosphate. Functionally, DNA-dependent RNA polymerase catalyzes the transcription of DNA into RNA using the four ribonucleoside triphosphates as substrates. This is DNA-directed RNA polymerase subunit beta' from Geotalea daltonii (strain DSM 22248 / JCM 15807 / FRC-32) (Geobacter daltonii).